A 496-amino-acid chain; its full sequence is Galactose/methyl galactoside import ATP-binding protein MglA (496 aa).

2 ABC transporter domains span residues 5–240 and 243–496; these read LTIR…VGRT and KRFP…ARYL. 37–44 contributes to the ATP binding site; that stretch reads GENGAGKS.

The protein belongs to the ABC transporter superfamily. Galactose/methyl galactoside importer (TC 3.A.1.2.3) family. As to quaternary structure, the complex is composed of one ATP-binding protein (MglA), two transmembrane proteins (MglC) and a solute-binding protein (MglB).

It is found in the cell inner membrane. The catalysed reaction is D-galactose(out) + ATP + H2O = D-galactose(in) + ADP + phosphate + H(+). It catalyses the reaction methyl beta-D-galactoside(out) + ATP + H2O = methyl beta-D-galactoside(in) + ADP + phosphate + H(+). Functionally, part of the ABC transporter complex MglABC involved in galactose/methyl galactoside import. Responsible for energy coupling to the transport system. The chain is Galactose/methyl galactoside import ATP-binding protein MglA from Treponema pallidum (strain Nichols).